We begin with the raw amino-acid sequence, 225 residues long: MKHLFKLDPAKNLPMNDLTKLVHSGTNGFIIGGTDNVQIEAVQKLYELLGETDLPIFLEISNESMILPEADHFLIPVVLNTENSKWTHGLHQELIKEMGAFIPWKRVTAEGYVILNKDAKVAHLTEAKTDLTDEDIVAYARLAENIFHLPIFYVEYSGMYGDPEVVRKASAALSNTKFWYGGGIRSKEQAAEMVKYADTIIVGNIIYEDLEKALETATIFRKKTV.

Residue Lys-6 participates in sn-glycerol 1-phosphate binding. Mg(2+)-binding residues include Asp-8 and Thr-34. Sn-glycerol 1-phosphate is bound by residues Tyr-153–Gly-158, Gly-183, and Gly-203–Asn-204.

This sequence belongs to the GGGP/HepGP synthase family. Group I subfamily. As to quaternary structure, homodimer. Mg(2+) is required as a cofactor.

It carries out the reaction sn-glycerol 1-phosphate + all-trans-heptaprenyl diphosphate = 3-heptaprenyl-sn-glycero-1-phosphate + diphosphate. It functions in the pathway membrane lipid metabolism; glycerophospholipid metabolism. Functionally, prenyltransferase that catalyzes in vivo the transfer of the heptaprenyl moiety of heptaprenyl pyrophosphate (HepPP; 35 carbon atoms) to the C3 hydroxyl of sn-glycerol-1-phosphate (G1P), producing heptaprenylglyceryl phosphate (HepGP). This reaction is an ether-bond-formation step in the biosynthesis of archaea-type G1P-based membrane lipids found in Bacillales. This Listeria monocytogenes serotype 4b (strain CLIP80459) protein is Heptaprenylglyceryl phosphate synthase.